Here is a 287-residue protein sequence, read N- to C-terminus: MIYSMTAFARLEVKKDWGDAVWEIRSVNQRYLENFFRLPEQFRGLENTLREKLRQNLTRGKIECSLRIETKKQANAELNLNKELANQVIQSLQWIKAQAGEGEINLTDVLRYPGVVEAQEQDLDAISQDLLTAFDDLLTDFIAMRGREGEKLNDIIQQRLDSIAVETDKVRSQMPAVLQWQRERLLQRFEDAQLNLDPQRVEQEMILLAQRIDVAEELDRLQMHVKETTNILKKGGAVGRKLDFMMQELNRESNTLASKSINADITASAVELKVLIEQMREQIQNLE.

It belongs to the YicC/YloC family. A divalent metal cation serves as cofactor.

In terms of biological role, probably a ssRNA endonuclease. Functionally, might contribute to small RNA (sRNA) regulation. This Haemophilus influenzae (strain ATCC 51907 / DSM 11121 / KW20 / Rd) protein is Probable endoribonuclease YicC.